The sequence spans 234 residues: NAD-dependent protein deacylase (234 aa).

In terms of domain architecture, Deacetylase sirtuin-type spans 1–234; the sequence is MKNLVILSGA…IEMASQEMLK (234 aa). Position 9-28 (9-28) interacts with NAD(+); it reads GAGISAESGIKTFRDAGGLW. Substrate-binding residues include Tyr-53 and Arg-56. 86–89 provides a ligand contact to NAD(+); sequence QNVD. His-104 (proton acceptor) is an active-site residue. NAD(+)-binding positions include 169–171 and Met-217; that span reads GTS.

The protein belongs to the sirtuin family. Class III subfamily.

Its subcellular location is the cytoplasm. It catalyses the reaction N(6)-acetyl-L-lysyl-[protein] + NAD(+) + H2O = 2''-O-acetyl-ADP-D-ribose + nicotinamide + L-lysyl-[protein]. The enzyme catalyses N(6)-succinyl-L-lysyl-[protein] + NAD(+) + H2O = 2''-O-succinyl-ADP-D-ribose + nicotinamide + L-lysyl-[protein]. Functionally, NAD-dependent lysine deacetylase and desuccinylase that specifically removes acetyl and succinyl groups on target proteins. Modulates the activities of several proteins which are inactive in their acylated form. In Helicobacter pylori (strain J99 / ATCC 700824) (Campylobacter pylori J99), this protein is NAD-dependent protein deacylase.